The primary structure comprises 225 residues: Membrane protein (225 aa).

Topologically, residues 1 to 20 are virion surface; sequence MPNETNCTLDFEQSVQLFKE. A helical transmembrane segment spans residues 21–41; that stretch reads YNLFITAFLLFLTIILQYGYA. The Intravirion portion of the chain corresponds to 42 to 51; that stretch reads TRTKVIYTLK. A helical transmembrane segment spans residues 52-72; that stretch reads MIVLWCFWPLNIAVGVISCTY. Residues 73-77 lie on the Virion surface side of the membrane; it reads PPNTG. The chain crosses the membrane as a helical span at residues 78–98; sequence GLVVAIILTVFACLSFVGYWI. Over 99-225 the chain is Intravirion; sequence QSIRLFKRCR…VATGGSSLYT (127 aa).

This sequence belongs to the gammacoronaviruses M protein family. Homomultimer. Interacts with envelope E protein in the budding compartment of the host cell, which is located between endoplasmic reticulum and the Golgi complex. Forms a complex with HE and S proteins. Interacts with nucleocapsid N protein. This interaction probably participates in RNA packaging into the virus.

The protein resides in the virion membrane. Its subcellular location is the host Golgi apparatus membrane. Its function is as follows. Component of the viral envelope that plays a central role in virus morphogenesis and assembly via its interactions with other viral proteins. The protein is Membrane protein of Avian infectious bronchitis virus (strain Beaudette US) (IBV).